The following is a 36-amino-acid chain: Pancreatic polypeptide (36 aa).

Y36 is modified (tyrosine amide).

This sequence belongs to the NPY family.

It is found in the secreted. In terms of biological role, hormone secreted by pancreatic cells that acts as a regulator of pancreatic and gastrointestinal functions probably by signaling through the G protein-coupled receptor NPY4R2. This Tapirus pinchaque (Mountain tapir) protein is Pancreatic polypeptide (PPY).